Consider the following 333-residue polypeptide: Mycothiol acetyltransferase (333 aa).

N-acetyltransferase domains lie at Pro-18–Pro-170 and Val-176–Asp-333. Glu-46 contacts 1D-myo-inositol 2-(L-cysteinylamino)-2-deoxy-alpha-D-glucopyranoside. Residue Ile-98–Val-100 coordinates acetyl-CoA. Positions 203, 242, and 261 each coordinate 1D-myo-inositol 2-(L-cysteinylamino)-2-deoxy-alpha-D-glucopyranoside. Acetyl-CoA-binding positions include Val-265–Val-267 and Gly-272–Arg-278. Position 299 (Tyr-299) interacts with 1D-myo-inositol 2-(L-cysteinylamino)-2-deoxy-alpha-D-glucopyranoside. Asn-304 to Arg-309 serves as a coordination point for acetyl-CoA.

This sequence belongs to the acetyltransferase family. MshD subfamily. As to quaternary structure, monomer.

It carries out the reaction 1D-myo-inositol 2-(L-cysteinylamino)-2-deoxy-alpha-D-glucopyranoside + acetyl-CoA = mycothiol + CoA + H(+). Catalyzes the transfer of acetyl from acetyl-CoA to desacetylmycothiol (Cys-GlcN-Ins) to form mycothiol. The sequence is that of Mycothiol acetyltransferase from Frankia alni (strain DSM 45986 / CECT 9034 / ACN14a).